A 364-amino-acid chain; its full sequence is Tyrosine-protein phosphatase YVH1 (364 aa).

Residues 11–173 (EVTRILGGIY…LHLFEKMGGD (163 aa)) enclose the Tyrosine-protein phosphatase domain. Cys117 (phosphocysteine intermediate) is an active-site residue. At Ser196 the chain carries Phosphoserine.

The protein belongs to the protein-tyrosine phosphatase family. Non-receptor class dual specificity subfamily.

It catalyses the reaction O-phospho-L-tyrosyl-[protein] + H2O = L-tyrosyl-[protein] + phosphate. Its function is as follows. May be directly involved in signal transduction and/or cell cycle regulation. It is necessary for maintaining growth rate or spore germination. Could show both activity toward tyrosine-protein phosphate as well as with serine-protein phosphate. The sequence is that of Tyrosine-protein phosphatase YVH1 (YVH1) from Saccharomyces cerevisiae (strain ATCC 204508 / S288c) (Baker's yeast).